Consider the following 231-residue polypeptide: Ribosomal RNA small subunit methyltransferase nep-1 (231 aa).

S-adenosyl-L-methionine is bound by residues Met161, Gly188, Gly193, and 206–211 (ISNYPL).

Belongs to the class IV-like SAM-binding methyltransferase superfamily. RNA methyltransferase NEP1 family. Homodimer.

It localises to the nucleus. The protein localises to the nucleolus. It catalyses the reaction a pseudouridine in rRNA + S-adenosyl-L-methionine = an N(1)-methylpseudouridine in rRNA + S-adenosyl-L-homocysteine + H(+). S-adenosyl-L-methionine-dependent pseudouridine N(1)-methyltransferase that methylates a pseudouridine in 18S rRNA. Involved the biosynthesis of the hypermodified N1-methyl-N3-(3-amino-3-carboxypropyl) pseudouridine (m1acp3-Psi) conserved in eukaryotic 18S rRNA. Also has an essential role in 40S ribosomal subunit biogenesis independent on its methyltransferase activity, facilitating the incorporation of ribosomal protein S19 during the formation of pre-ribosomes. The chain is Ribosomal RNA small subunit methyltransferase nep-1 from Caenorhabditis elegans.